The primary structure comprises 125 residues: Large ribosomal subunit protein bL20 (125 aa).

It belongs to the bacterial ribosomal protein bL20 family.

Binds directly to 23S ribosomal RNA and is necessary for the in vitro assembly process of the 50S ribosomal subunit. It is not involved in the protein synthesizing functions of that subunit. The chain is Large ribosomal subunit protein bL20 from Thermobifida fusca (strain YX).